Reading from the N-terminus, the 322-residue chain is NADH-cytochrome b5 reductase 2 (322 aa).

Residues Leu31–Tyr48 form a helical membrane-spanning segment. Residues Gln72 to Glu176 enclose the FAD-binding FR-type domain. Residue Lys179 to Leu214 participates in FAD binding.

It belongs to the flavoprotein pyridine nucleotide cytochrome reductase family. It depends on FAD as a cofactor.

It is found in the mitochondrion outer membrane. It carries out the reaction 2 Fe(III)-[cytochrome b5] + NADH = 2 Fe(II)-[cytochrome b5] + NAD(+) + H(+). May mediate the reduction of outer membrane cytochrome b5. This is NADH-cytochrome b5 reductase 2 (mcr1) from Aspergillus niger (strain ATCC MYA-4892 / CBS 513.88 / FGSC A1513).